Consider the following 541-residue polypeptide: RING finger protein 37 (541 aa).

In terms of domain architecture, U-box spans D258 to P338. Position 451 is an asymmetric dimethylarginine (R451). Residues C483–Q528 form an RING-type zinc finger.

As to quaternary structure, interacts with UBE2L3. Interacts with VCP. As to expression, expressed in liver, heart, brain, kidney and testis.

Its subcellular location is the nucleus. The enzyme catalyses S-ubiquitinyl-[E2 ubiquitin-conjugating enzyme]-L-cysteine + [acceptor protein]-L-lysine = [E2 ubiquitin-conjugating enzyme]-L-cysteine + N(6)-ubiquitinyl-[acceptor protein]-L-lysine.. The protein operates within protein modification; protein ubiquitination. May have a ubiquitin-protein ligase activity acting as an E3 ubiquitin-protein ligase or as a ubiquitin-ubiquitin ligase promoting elongation of ubiquitin chains on substrates. In Homo sapiens (Human), this protein is RING finger protein 37.